A 204-amino-acid chain; its full sequence is Putative AgrB-like protein (204 aa).

The next 4 membrane-spanning stretches (helical) occupy residues 52-74 (YGIA…YLWL), 87-107 (LNCT…FQNV), 111-131 (NWIV…FAPA), and 156-176 (LILT…LIMI).

Belongs to the AgrB family.

It is found in the cell membrane. In terms of biological role, may be involved in the proteolytic processing of a quorum sensing system signal molecule precursor. The polypeptide is Putative AgrB-like protein (Listeria monocytogenes serotype 4a (strain HCC23)).